We begin with the raw amino-acid sequence, 221 residues long: PKHD-type hydroxylase P9215_13741 (221 aa).

The 95-residue stretch at 80 to 174 folds into the Fe2OG dioxygenase domain; that stretch reads RIHGTMFTKT…RFVVVGWIES (95 aa). Positions 98, 100, and 155 each coordinate Fe cation. Arg165 is a binding site for 2-oxoglutarate.

Requires Fe(2+) as cofactor. It depends on L-ascorbate as a cofactor.

The protein is PKHD-type hydroxylase P9215_13741 of Prochlorococcus marinus (strain MIT 9215).